We begin with the raw amino-acid sequence, 521 residues long: Feruloyl esterase B (521 aa).

The signal sequence occupies residues 1–17 (MKVASLLSLALPGAALA). 2 cysteine pairs are disulfide-bonded: C26–C72 and C61–C111. 6 N-linked (GlcNAc...) asparagine glycosylation sites follow: N37, N51, N77, N95, N144, and N177. 3 cysteine pairs are disulfide-bonded: C184-C438, C253-C270, and C279-C288. The active-site Acyl-ester intermediate is the S185. Ca(2+)-binding residues include D254, D257, A259, D261, and I263. N-linked (GlcNAc...) asparagine glycosylation is found at N284, N347, N352, and N378. Catalysis depends on charge relay system residues D397 and H437. 2 N-linked (GlcNAc...) asparagine glycosylation sites follow: N488 and N511. A disulfide bridge connects residues C498 and C520.

The protein belongs to the tannase family. Homodimer. In terms of processing, glycosylated.

It localises to the secreted. It carries out the reaction feruloyl-polysaccharide + H2O = ferulate + polysaccharide.. With respect to regulation, inhibited by the specific serine esterase inhibitor AEBSF. Involved in degradation of plant cell walls. Hydrolyzes of the feruloyl-arabinose ester bond in arabinoxylans as well as the feruloyl-galactose and feruloyl-arabinose ester bonds in pectin. In Aspergillus niger, this protein is Feruloyl esterase B (faeB).